The sequence spans 460 residues: Cell death abnormality protein 8 (460 aa).

At 1 to 45 the chain is on the cytoplasmic side; the sequence is MYLKKHESKLLLIPKNEDKEDAGIIAVLTDRVPSVLIVRWFDLFC. The chain crosses the membrane as a helical span at residues 46 to 66; it reads FGFAMCSYVLDFFSDIGIAIF. Over 67 to 77 the chain is Extracellular; it reads HFWAGRHLSGA. The helical transmembrane segment at 78 to 98 threads the bilayer; it reads LVLTFALIPSVIINIISMVWM. Residues 99–123 lie on the Cytoplasmic side of the membrane; the sequence is LDDEMHWKRRAHPRRTGTFELNQKR. A helical membrane pass occupies residues 124–144; that stretch reads FISLGKMITLCIFQMGPLFWY. Residues 145–219 are Extracellular-facing; the sequence is YKALYYGWMF…YYISGKYPYW (75 aa). The helical transmembrane segment at 220-240 threads the bilayer; the sequence is LYFQAASLTLSIISISWSVVV. Residues 241–274 lie on the Cytoplasmic side of the membrane; the sequence is QNRSLRMTRDDKVNIWPHEAVLQFCWRFLTILAR. The helical transmembrane segment at 275–295 threads the bilayer; sequence IITLVAFVLLFGIYVVFLIFG. Residues 296-320 are Extracellular-facing; sequence HLIVTLVHVIFLQALHIEACTHIEK. A helical membrane pass occupies residues 321 to 341; the sequence is LLLLINAMIHLFTPFNMAEGN. Topologically, residues 342–353 are cytoplasmic; that stretch reads TRYRYLVAYTVE. The chain crosses the membrane as a helical span at residues 354-374; the sequence is FIEMMIIFLLLPTPLDAFPLI. Residues 375–378 lie on the Extracellular side of the membrane; the sequence is EKIR. A helical transmembrane segment spans residues 379-399; the sequence is IGVPATFFIGIFIMLIYYKFF. The Cytoplasmic portion of the chain corresponds to 400 to 460; that stretch reads HPNRRQDLEA…SLLEEDECHN (61 aa).

Belongs to the XK family. Post-translationally, cleavage by ced-3 activates ced-8 function in promoting phosphatidylserine exposure at the surface of apoptotic cells.

Its subcellular location is the cell membrane. Functionally, acts downstream of ced-9 and caspase ced-3 to promote phosphatidylserine exposure on apoptotic cell surface, possibly by mediating phospholipid scrambling. Phosphatidylserine is a specific marker only present at the surface of apoptotic cells and acts as a specific signal for engulfment. Regulates apoptosis kinetics during embryonic development. Not required for engulfment of germ cell corpses. This Caenorhabditis briggsae protein is Cell death abnormality protein 8.